Here is a 648-residue protein sequence, read N- to C-terminus: Bifunctional lysine-specific demethylase and histidyl-hydroxylase NO66 (648 aa).

Residues 1 to 168 (MSKVSSIFDT…KGAKAAKKNK (168 aa)) form a disordered region. Residues 17 to 28 (PATTENGAAAKP) are compositionally biased toward low complexity. A compositionally biased stretch (basic residues) spans 109 to 119 (DHRKHKEKLRK). Polar residues predominate over residues 123-137 (GVENSRQAAASTSML). Positions 155-168 (PVHHKGAKAAKKNK) are enriched in basic residues. Positions 308 to 453 (CSIRMLNPQT…DLLELYLPHA (146 aa)) constitute a JmjC domain. Fe cation is bound by residues His354, Asp356, and His419.

This sequence belongs to the ROX family. NO66 subfamily. Fe(2+) is required as a cofactor.

The protein resides in the nucleus. It carries out the reaction N(6),N(6)-dimethyl-L-lysyl(36)-[histone H3] + 2 2-oxoglutarate + 2 O2 = L-lysyl(36)-[histone H3] + 2 formaldehyde + 2 succinate + 2 CO2. Functionally, oxygenase that can act as both a histone lysine demethylase and a ribosomal histidine hydroxylase. Specifically demethylates 'Lys-4' (H3K4me) and 'Lys-36' (H3K36me) of histone H3, thereby playing a central role in histone code. The chain is Bifunctional lysine-specific demethylase and histidyl-hydroxylase NO66 from Culex quinquefasciatus (Southern house mosquito).